The sequence spans 27 residues: Cupiennin-4b (27 aa).

Gln-27 bears the Glutamine amide mark.

In terms of tissue distribution, expressed by the venom gland.

The protein localises to the secreted. This chain is Cupiennin-4b, found in Cupiennius salei (American wandering spider).